A 468-amino-acid chain; its full sequence is Zinc finger protein 672 (468 aa).

4 C2H2-type zinc fingers span residues 15–37, 43–65, 71–93, and 100–123; these read YSCS…ERAH, FRCL…RWTH, YICS…LGTH, and CPCR…VRQH. Residues 129-151 form a C2H2-type 5; degenerate zinc finger; sequence HRCPLCARSFRQSALPFHLARAH. 9 consecutive C2H2-type zinc fingers follow at residues 167 to 189, 202 to 224, 230 to 252, 258 to 280, 286 to 308, 314 to 336, 342 to 364, 370 to 392, and 398 to 420; these read YHCT…SRIH, HRCG…LQRH, FKCP…QRTH, YACN…QRSH, HICA…QRSH, FPCP…LRTH, YHCE…LRNH, HKCP…RKTH, and AECT…QRSH.

This sequence belongs to the krueppel C2H2-type zinc-finger protein family.

It is found in the nucleus. In terms of biological role, may be involved in transcriptional regulation. The sequence is that of Zinc finger protein 672 (Znf672) from Rattus norvegicus (Rat).